The sequence spans 660 residues: Putative ATP-dependent RNA helicase Pl10 (660 aa).

Positions 1-11 are enriched in acidic residues; sequence MSHVAEEDELG. The disordered stretch occupies residues 1–117; it reads MSHVAEEDEL…SRGGRSGFGK (117 aa). Residue Ser-2 is modified to N-acetylserine. The segment covering 12–21 has biased composition (low complexity); that stretch reads LDQQLAGLDL. Residues 24-34 show a composition bias toward polar residues; sequence RDSQSGGSTAS. The segment covering 44-66 has biased composition (basic and acidic residues); sequence RNREAAKAFYDKDGSRWSKDKDA. N6-acetyllysine is present on Lys-55. Ser-80, Ser-84, and Ser-89 each carry phosphoserine. Residues 93-103 are compositionally biased toward basic and acidic residues; it reads GRFDERGRSDY. Arg-100 carries the omega-N-methylarginine modification. Ser-101 is modified (phosphoserine). At Tyr-103 the chain carries Phosphotyrosine. An Omega-N-methylarginine modification is found at Arg-109. N6-acetyllysine is present on Lys-117. The Q motif signature appears at 179 to 207; it reads ESFSDVEMGEIIMGNIELTRYTRPTPVQK. Residue Ser-182 is modified to Phosphoserine. Residue 199–206 coordinates ATP; it reads YTRPTPVQ. One can recognise a Helicase ATP-binding domain in the interval 210 to 402; sequence IPIIKEKRDL…RDFLDEYIFL (193 aa). Residue Lys-214 forms a Glycyl lysine isopeptide (Lys-Gly) (interchain with G-Cter in SUMO2) linkage. 223–230 is an ATP binding site; that stretch reads AQTGSGKT. A DEAD box motif is present at residues 346 to 349; that stretch reads DEAD. The region spanning 413 to 574 is the Helicase C-terminal domain; the sequence is NITQKVVWVE…EVPSWLENMA (162 aa). Ser-455 carries the post-translational modification Phosphoserine. At Arg-590 the chain carries Omega-N-methylarginine. Phosphoserine is present on residues Ser-592, Ser-603, and Ser-610. Residues 598–632 form a disordered region; it reads RDYRQSSGASSSSFSSGRASNSRSGGGSHGSSRGF. A compositionally biased stretch (low complexity) spans 602 to 620; that stretch reads QSSGASSSSFSSGRASNSR. An omega-N-methylarginine mark is found at Arg-615 and Arg-630. Residues 621-632 show a composition bias toward gly residues; sequence SGGGSHGSSRGF.

Belongs to the DEAD box helicase family. DDX3/DED1 subfamily. In terms of tissue distribution, testis.

It catalyses the reaction ATP + H2O = ADP + phosphate + H(+). Its function is as follows. Putative ATP-dependent RNA helicase. Possible role in a key step of the spermatogenic process. The chain is Putative ATP-dependent RNA helicase Pl10 (D1Pas1) from Mus musculus (Mouse).